The sequence spans 1381 residues: DNA-directed RNA polymerase subunit beta (1381 aa).

It belongs to the RNA polymerase beta chain family. In terms of assembly, the RNAP catalytic core consists of 2 alpha, 1 beta, 1 beta' and 1 omega subunit. When a sigma factor is associated with the core the holoenzyme is formed, which can initiate transcription.

It carries out the reaction RNA(n) + a ribonucleoside 5'-triphosphate = RNA(n+1) + diphosphate. Its function is as follows. DNA-dependent RNA polymerase catalyzes the transcription of DNA into RNA using the four ribonucleoside triphosphates as substrates. This chain is DNA-directed RNA polymerase subunit beta, found in Sulfurimonas denitrificans (strain ATCC 33889 / DSM 1251) (Thiomicrospira denitrificans (strain ATCC 33889 / DSM 1251)).